A 369-amino-acid chain; its full sequence is GTPase Obg (369 aa).

The 159-residue stretch at 1–159 (MKFIDEAKIE…RELRLELKVL (159 aa)) folds into the Obg domain. Positions 128-148 (IHFKSSTNRAPRQKSEGKEGE) are disordered. Residues 160–333 (ADIGLLGMPN…LVTEIYEYIA (174 aa)) enclose the OBG-type G domain. GTP is bound by residues 166 to 173 (GMPNAGKS), 191 to 195 (FTTLH), 213 to 216 (DIPG), 283 to 286 (NKLD), and 314 to 316 (SAL). Residues Ser-173 and Thr-193 each contribute to the Mg(2+) site.

The protein belongs to the TRAFAC class OBG-HflX-like GTPase superfamily. OBG GTPase family. In terms of assembly, monomer. The cofactor is Mg(2+).

It localises to the cytoplasm. An essential GTPase which binds GTP, GDP and possibly (p)ppGpp with moderate affinity, with high nucleotide exchange rates and a fairly low GTP hydrolysis rate. Plays a role in control of the cell cycle, stress response, ribosome biogenesis and in those bacteria that undergo differentiation, in morphogenesis control. This is GTPase Obg from Janthinobacterium sp. (strain Marseille) (Minibacterium massiliensis).